Here is a 194-residue protein sequence, read N- to C-terminus: CASP-like protein 4C1 (194 aa).

Over 1–35 the chain is Cytoplasmic; sequence MRSPHAFRNGESPTLRDHTHFHSTVTAQKLRRFNS. A helical transmembrane segment spans residues 36-56; it reads LILLLRLASFSFSLASAVFML. Residues 57-74 are Extracellular-facing; that stretch reads TNSRGSASPHWYDFDAFR. A helical transmembrane segment spans residues 75 to 95; sequence FVFVANAIVALYSVFEMGTCV. Topologically, residues 96–114 are cytoplasmic; sequence WEFSRETTLWPEAFQVWFD. Residues 115–135 form a helical membrane-spanning segment; sequence FGHDQVFSYLLLSAGSAAAAL. Residues 136 to 157 lie on the Extracellular side of the membrane; that stretch reads ARTMRGGDTCTANKAFCLQSDV. A helical membrane pass occupies residues 158 to 178; the sequence is AIGLGFAAFLFLAFSSCFSGF. Residues 179 to 194 lie on the Cytoplasmic side of the membrane; that stretch reads RVACFLITGSRFHLYS.

Belongs to the Casparian strip membrane proteins (CASP) family. As to quaternary structure, homodimer and heterodimers.

It is found in the cell membrane. This chain is CASP-like protein 4C1, found in Arabidopsis thaliana (Mouse-ear cress).